Reading from the N-terminus, the 144-residue chain is Transcription antitermination protein NusB (144 aa).

The protein belongs to the NusB family.

Functionally, involved in transcription antitermination. Required for transcription of ribosomal RNA (rRNA) genes. Binds specifically to the boxA antiterminator sequence of the ribosomal RNA (rrn) operons. This Histophilus somni (strain 129Pt) (Haemophilus somnus) protein is Transcription antitermination protein NusB.